Reading from the N-terminus, the 752-residue chain is Cation-transporting P-type ATPase B (752 aa).

The 64-residue stretch at 15–78 folds into the HMA domain; sequence RRIRLDVSGM…VVEKAGYHAA (64 aa). 2 residues coordinate a metal cation: Cys26 and Cys29. Helical transmembrane passes span 105–125, 132–152, 167–187, 201–221, 361–381, and 390–410; these read LLVAAVLFVPLADLSTLFAIV, GWGYILTALAAPVVTWAAWPF, METLISVGIVAATAWSLSSVF, AILNSDSIYLEVAAGVTVFVL, IAGVFVPVVFVIAGLAGAAWL, and AFSVTLGVLVIACPCALGLAT. Asp446 functions as the 4-aspartylphosphate intermediate in the catalytic mechanism. Residues 714-734 form a helical membrane-spanning segment; it reads AIPIAAAGLLNPLIAGAAMAF.

It belongs to the cation transport ATPase (P-type) (TC 3.A.3) family. Type IB subfamily.

The protein resides in the cell membrane. The enzyme catalyses ATP + H2O = ADP + phosphate + H(+). This chain is Cation-transporting P-type ATPase B (ctpB), found in Mycobacterium bovis (strain ATCC BAA-935 / AF2122/97).